The primary structure comprises 213 residues: ATP synthase subunit delta 2 (213 aa).

It belongs to the ATPase delta chain family. In terms of assembly, F-type ATPases have 2 components, F(1) - the catalytic core - and F(0) - the membrane proton channel. F(1) has five subunits: alpha(3), beta(3), gamma(1), delta(1), epsilon(1). F(0) has three main subunits: a(1), b(2) and c(10-14). The alpha and beta chains form an alternating ring which encloses part of the gamma chain. F(1) is attached to F(0) by a central stalk formed by the gamma and epsilon chains, while a peripheral stalk is formed by the delta and b chains.

The protein resides in the cell inner membrane. Its function is as follows. F(1)F(0) ATP synthase produces ATP from ADP in the presence of a proton or sodium gradient. F-type ATPases consist of two structural domains, F(1) containing the extramembraneous catalytic core and F(0) containing the membrane proton channel, linked together by a central stalk and a peripheral stalk. During catalysis, ATP synthesis in the catalytic domain of F(1) is coupled via a rotary mechanism of the central stalk subunits to proton translocation. In terms of biological role, this protein is part of the stalk that links CF(0) to CF(1). It either transmits conformational changes from CF(0) to CF(1) or is implicated in proton conduction. This is ATP synthase subunit delta 2 from Brachyspira hyodysenteriae (strain ATCC 49526 / WA1).